The following is a 538-amino-acid chain: Phosphoenolpyruvate carboxykinase (ATP) (538 aa).

Substrate-binding residues include Arg-64, Tyr-205, and Lys-211. Residues Lys-211, His-230, and 246–254 (GLSGTGKTT) contribute to the ATP site. Residues Lys-211 and His-230 each coordinate Mn(2+). Asp-267 is a binding site for Mn(2+). ATP is bound by residues Glu-295, Arg-331, 447–448 (RI), and Thr-453. Arg-331 provides a ligand contact to substrate.

Belongs to the phosphoenolpyruvate carboxykinase (ATP) family. As to quaternary structure, monomer. It depends on Mn(2+) as a cofactor.

The protein localises to the cytoplasm. It catalyses the reaction oxaloacetate + ATP = phosphoenolpyruvate + ADP + CO2. It participates in carbohydrate biosynthesis; gluconeogenesis. In terms of biological role, involved in the gluconeogenesis. Catalyzes the conversion of oxaloacetate (OAA) to phosphoenolpyruvate (PEP) through direct phosphoryl transfer between the nucleoside triphosphate and OAA. The protein is Phosphoenolpyruvate carboxykinase (ATP) of Haemophilus influenzae (strain 86-028NP).